The chain runs to 478 residues: tRNA modification GTPase MnmE (478 aa).

Positions 36, 94, and 133 each coordinate (6S)-5-formyl-5,6,7,8-tetrahydrofolate. The TrmE-type G domain maps to 230–402 (GIHVVLAGRP…LVETLCAKVG (173 aa)). A K(+)-binding site is contributed by Asn-240. GTP-binding positions include 240-245 (NAGKSS), 259-265 (TDVAGTT), and 284-287 (DTAG). Ser-244 lines the Mg(2+) pocket. K(+)-binding residues include Thr-259, Val-261, and Thr-264. Residue Thr-265 coordinates Mg(2+). Residue Lys-478 coordinates (6S)-5-formyl-5,6,7,8-tetrahydrofolate.

This sequence belongs to the TRAFAC class TrmE-Era-EngA-EngB-Septin-like GTPase superfamily. TrmE GTPase family. As to quaternary structure, homodimer. Heterotetramer of two MnmE and two MnmG subunits. It depends on K(+) as a cofactor.

The protein resides in the cytoplasm. In terms of biological role, exhibits a very high intrinsic GTPase hydrolysis rate. Involved in the addition of a carboxymethylaminomethyl (cmnm) group at the wobble position (U34) of certain tRNAs, forming tRNA-cmnm(5)s(2)U34. This Psychrobacter cryohalolentis (strain ATCC BAA-1226 / DSM 17306 / VKM B-2378 / K5) protein is tRNA modification GTPase MnmE.